Here is a 62-residue protein sequence, read N- to C-terminus: Photosystem II reaction center protein Z (62 aa).

2 helical membrane-spanning segments follow: residues 8-28 (AVFA…VVLA) and 41-61 (FSGA…NSFV).

The protein belongs to the PsbZ family. As to quaternary structure, PSII is composed of 1 copy each of membrane proteins PsbA, PsbB, PsbC, PsbD, PsbE, PsbF, PsbH, PsbI, PsbJ, PsbK, PsbL, PsbM, PsbT, PsbY, PsbZ, Psb30/Ycf12, at least 3 peripheral proteins of the oxygen-evolving complex and a large number of cofactors. It forms dimeric complexes.

It localises to the plastid. Its subcellular location is the chloroplast thylakoid membrane. May control the interaction of photosystem II (PSII) cores with the light-harvesting antenna, regulates electron flow through the 2 photosystem reaction centers. PSII is a light-driven water plastoquinone oxidoreductase, using light energy to abstract electrons from H(2)O, generating a proton gradient subsequently used for ATP formation. This is Photosystem II reaction center protein Z from Zygnema circumcarinatum (Green alga).